Consider the following 460-residue polypeptide: Cysteine--tRNA ligase (460 aa).

Cysteine 28 serves as a coordination point for Zn(2+). The short motif at 30-40 is the 'HIGH' region element; it reads MTVYDYCHLGH. Zn(2+) contacts are provided by cysteine 209, histidine 234, and glutamate 238. The short motif at 266–270 is the 'KMSKS' region element; the sequence is KMSKS. Lysine 269 contributes to the ATP binding site.

It belongs to the class-I aminoacyl-tRNA synthetase family. In terms of assembly, monomer. It depends on Zn(2+) as a cofactor.

The protein resides in the cytoplasm. The enzyme catalyses tRNA(Cys) + L-cysteine + ATP = L-cysteinyl-tRNA(Cys) + AMP + diphosphate. This chain is Cysteine--tRNA ligase, found in Pseudomonas fluorescens (strain Pf0-1).